Consider the following 423-residue polypeptide: Growth hormone-releasing hormone receptor (423 aa).

Residues 1-22 (MDSGVWAACIFCLLSSLPVALG) form the signal peptide. The Extracellular segment spans residues 23–130 (HVHPECDFIT…DEKSYFSTVR (108 aa)). 3 disulfides stabilise this stretch: C41/C64, C55/C96, and C78/C112. N50 carries an N-linked (GlcNAc...) asparagine glycan. Residues 131 to 151 (IVYTTGHSVSAVALFVAIAIL) form a helical membrane-spanning segment. At 152–167 (VALRRLHCPRNYIHSQ) the chain is on the cytoplasmic side. A helical membrane pass occupies residues 168–188 (LFATFILKAGAVFLKDAALFH). Topologically, residues 189 to 210 (SENTDHCSFSTVLCKVSVATSH) are extracellular. Residues 211–231 (FATMTNFSWLLAEAVYLTCLL) form a helical membrane-spanning segment. Over 232 to 240 (ASTSPSTRR) the chain is Cytoplasmic. The chain crosses the membrane as a helical span at residues 241-261 (AFWWLVLAGWGLPLLFTGTWV). Residues 262–283 (GCKLAFEDVACWDLDDSSPYWW) are Extracellular-facing. Residues 284–304 (IIKGPIVLSVGVNFGLFLNII) form a helical membrane-spanning segment. The Cytoplasmic segment spans residues 305-331 (RILLRKLEPAQGSLHTQPQYWRLSKST). A helical membrane pass occupies residues 332-352 (LLLIPLFGIHYVIFNFLPDSA). Topologically, residues 353–357 (GLGIR) are extracellular. The chain crosses the membrane as a helical span at residues 358–378 (LPLELGLGSFQGFIVAILYCF). Topologically, residues 379 to 423 (LNQEVRTEISRRWHGHDPELLPAWRTHAKWAKPSRSRAKVLTTVC) are cytoplasmic.

This sequence belongs to the G-protein coupled receptor 2 family. In terms of tissue distribution, pituitary gland. Also detected in the lymphocytes and thymocytes.

The protein localises to the cell membrane. In terms of biological role, receptor for GRF, coupled to G proteins which activate adenylyl cyclase. Stimulates somatotroph cell growth, growth hormone gene transcription and growth hormone secretion. The protein is Growth hormone-releasing hormone receptor (GHRHR) of Sus scrofa (Pig).